The chain runs to 436 residues: 3-ketoacyl-CoA thiolase (436 aa).

Residue Cys99 is the Acyl-thioester intermediate of the active site. Active-site proton acceptor residues include His392 and Cys422.

It belongs to the thiolase-like superfamily. Thiolase family. Heterotetramer of two alpha chains (FadJ) and two beta chains (FadI).

It is found in the cytoplasm. It carries out the reaction an acyl-CoA + acetyl-CoA = a 3-oxoacyl-CoA + CoA. Its pathway is lipid metabolism; fatty acid beta-oxidation. In terms of biological role, catalyzes the final step of fatty acid oxidation in which acetyl-CoA is released and the CoA ester of a fatty acid two carbons shorter is formed. This is 3-ketoacyl-CoA thiolase from Shewanella amazonensis (strain ATCC BAA-1098 / SB2B).